The sequence spans 464 residues: Protein FAM90A7 (464 aa).

Disordered stretches follow at residues Met1 to Leu42, Val69 to Asp387, and Ala410 to Pro437. Composition is skewed to basic and acidic residues over residues Gly74–Ala89 and Asn97–Asp111. The segment covering Leu180 to Leu197 has biased composition (low complexity).

The protein belongs to the FAM90 family.

The protein is Protein FAM90A7 of Homo sapiens (Human).